A 257-amino-acid chain; its full sequence is Deoxyribose-phosphate aldolase (257 aa).

The active-site Proton donor/acceptor is the Asp-102. Lys-166 acts as the Schiff-base intermediate with acetaldehyde in catalysis. Catalysis depends on Lys-198, which acts as the Proton donor/acceptor.

It belongs to the DeoC/FbaB aldolase family. DeoC type 2 subfamily.

The protein localises to the cytoplasm. The catalysed reaction is 2-deoxy-D-ribose 5-phosphate = D-glyceraldehyde 3-phosphate + acetaldehyde. Its pathway is carbohydrate degradation; 2-deoxy-D-ribose 1-phosphate degradation; D-glyceraldehyde 3-phosphate and acetaldehyde from 2-deoxy-alpha-D-ribose 1-phosphate: step 2/2. Functionally, catalyzes a reversible aldol reaction between acetaldehyde and D-glyceraldehyde 3-phosphate to generate 2-deoxy-D-ribose 5-phosphate. This chain is Deoxyribose-phosphate aldolase, found in Aeromonas salmonicida (strain A449).